Consider the following 381-residue polypeptide: Queuine tRNA-ribosyltransferase (381 aa).

Asp-92 acts as the Proton acceptor in catalysis. Substrate contacts are provided by residues 92 to 96 (DSGGF), Asp-146, Gln-190, and Gly-217. An RNA binding region spans residues 248-254 (GVGRPED). The active-site Nucleophile is the Asp-267. An RNA binding; important for wobble base 34 recognition region spans residues 272-276 (TRNAR). 4 residues coordinate Zn(2+): Cys-305, Cys-307, Cys-310, and His-337.

The protein belongs to the queuine tRNA-ribosyltransferase family. As to quaternary structure, homodimer. Within each dimer, one monomer is responsible for RNA recognition and catalysis, while the other monomer binds to the replacement base PreQ1. Zn(2+) serves as cofactor.

It catalyses the reaction 7-aminomethyl-7-carbaguanine + guanosine(34) in tRNA = 7-aminomethyl-7-carbaguanosine(34) in tRNA + guanine. It functions in the pathway tRNA modification; tRNA-queuosine biosynthesis. Its function is as follows. Catalyzes the base-exchange of a guanine (G) residue with the queuine precursor 7-aminomethyl-7-deazaguanine (PreQ1) at position 34 (anticodon wobble position) in tRNAs with GU(N) anticodons (tRNA-Asp, -Asn, -His and -Tyr). Catalysis occurs through a double-displacement mechanism. The nucleophile active site attacks the C1' of nucleotide 34 to detach the guanine base from the RNA, forming a covalent enzyme-RNA intermediate. The proton acceptor active site deprotonates the incoming PreQ1, allowing a nucleophilic attack on the C1' of the ribose to form the product. After dissociation, two additional enzymatic reactions on the tRNA convert PreQ1 to queuine (Q), resulting in the hypermodified nucleoside queuosine (7-(((4,5-cis-dihydroxy-2-cyclopenten-1-yl)amino)methyl)-7-deazaguanosine). In Xanthomonas campestris pv. campestris (strain 8004), this protein is Queuine tRNA-ribosyltransferase.